Here is a 504-residue protein sequence, read N- to C-terminus: Maturase K (504 aa).

Belongs to the intron maturase 2 family. MatK subfamily.

Its subcellular location is the plastid. The protein localises to the chloroplast. Functionally, usually encoded in the trnK tRNA gene intron. Probably assists in splicing its own and other chloroplast group II introns. This chain is Maturase K, found in Pachira aquatica (Guiana chestnut).